Here is a 199-residue protein sequence, read N- to C-terminus: MPEQSNDYRVAVFGAGGVGKSSLVLRFVKGTFRESYIPTVEDTYRQVISCDKSICTLQITDTTGSHQFPAMQRLSISKGHAFILVYSITSRQSLEELKPIYEQICEIKGDMESIPIMLVGNKCDESPSREVQSSEAEALARTWKCAFMETSAKLNHNVKELFQELLNLEKRRTVSLQIDGKKSKQQKRKEKLKGKCVIM.

GTP-binding positions include glycine 14–serine 21, arginine 33–threonine 39, aspartate 61–serine 65, and asparagine 121–aspartate 124. Position 35 is a phosphoserine (serine 35). Positions tyrosine 36–tyrosine 44 match the Effector region motif. Phosphoserine is present on serine 126. Residue alanine 152–lysine 153 participates in GTP binding. Cysteine 196 is modified (cysteine methyl ester). Residue cysteine 196 is the site of S-geranylgeranyl cysteine attachment. Residues valine 197–methionine 199 constitute a propeptide, removed in mature form.

This sequence belongs to the small GTPase superfamily. Di-Ras family. In terms of processing, ubiquitinated by the ECS(ASB11) complex via 'Lys-11'-linked ubiquitin chains, leading to its degradation by the proteasome.

The protein localises to the cell membrane. It catalyses the reaction GTP + H2O = GDP + phosphate + H(+). In terms of biological role, displays low GTPase activity and exists predominantly in the GTP-bound form. This Macaca fascicularis (Crab-eating macaque) protein is GTP-binding protein Di-Ras2 (DIRAS2).